Reading from the N-terminus, the 278-residue chain is 4-diphosphocytidyl-2-C-methyl-D-erythritol kinase (278 aa).

Lys-9 is an active-site residue. 93-103 (PISAGLAGGSS) serves as a coordination point for ATP. Residue Asp-135 is part of the active site.

The protein belongs to the GHMP kinase family. IspE subfamily.

It catalyses the reaction 4-CDP-2-C-methyl-D-erythritol + ATP = 4-CDP-2-C-methyl-D-erythritol 2-phosphate + ADP + H(+). Its pathway is isoprenoid biosynthesis; isopentenyl diphosphate biosynthesis via DXP pathway; isopentenyl diphosphate from 1-deoxy-D-xylulose 5-phosphate: step 3/6. Its function is as follows. Catalyzes the phosphorylation of the position 2 hydroxy group of 4-diphosphocytidyl-2C-methyl-D-erythritol. This Finegoldia magna (strain ATCC 29328 / DSM 20472 / WAL 2508) (Peptostreptococcus magnus) protein is 4-diphosphocytidyl-2-C-methyl-D-erythritol kinase.